We begin with the raw amino-acid sequence, 241 residues long: Methylthioribulose-1-phosphate dehydratase (241 aa).

Residue Cys96 participates in substrate binding. Zn(2+)-binding residues include His114 and His116. Glu138 serves as the catalytic Proton donor/acceptor. Residue His194 coordinates Zn(2+).

Belongs to the aldolase class II family. MtnB subfamily. As to quaternary structure, homotetramer. Interacts with APAF1. May interact with CASP1. The cofactor is Zn(2+). As to expression, expressed in skeletal muscle (at protein level).

The protein localises to the cytoplasm. It carries out the reaction 5-(methylsulfanyl)-D-ribulose 1-phosphate = 5-methylsulfanyl-2,3-dioxopentyl phosphate + H2O. It functions in the pathway amino-acid biosynthesis; L-methionine biosynthesis via salvage pathway; L-methionine from S-methyl-5-thio-alpha-D-ribose 1-phosphate: step 2/6. Catalyzes the dehydration of methylthioribulose-1-phosphate (MTRu-1-P) into 2,3-diketo-5-methylthiopentyl-1-phosphate (DK-MTP-1-P). Functions in the methionine salvage pathway, which plays a key role in cancer, apoptosis, microbial proliferation and inflammation. May inhibit the CASP1-related inflammatory response (pyroptosis), the CASP9-dependent apoptotic pathway and the cytochrome c-dependent and APAF1-mediated cell death. This is Methylthioribulose-1-phosphate dehydratase from Mus musculus (Mouse).